A 210-amino-acid polypeptide reads, in one-letter code: Actin-related protein 3C (210 aa).

The signal sequence occupies residues 1–21 (MFESFNVPGLYIAVQAVLALA).

It belongs to the actin family. As to expression, expressed in kidney, stomach, spleen, bone marrow, uterus, testis, placenta, skeletal muscle, mammary gland, lung, fetal liver, and fetal kidney, but not detected in small intestine, brain, and thymus. Expressed in low-metastatic lung adenocarcinoma cells but not in high-metastatic ones.

Functionally, may play a role in the suppression of metastatic potential in lung adenoma carcinoma cells. The sequence is that of Actin-related protein 3C (ACTR3C) from Homo sapiens (Human).